A 291-amino-acid polypeptide reads, in one-letter code: ATP synthase gamma chain (291 aa).

It belongs to the ATPase gamma chain family. In terms of assembly, F-type ATPases have 2 components, CF(1) - the catalytic core - and CF(0) - the membrane proton channel. CF(1) has five subunits: alpha(3), beta(3), gamma(1), delta(1), epsilon(1). CF(0) has three main subunits: a, b and c.

It is found in the cell membrane. In terms of biological role, produces ATP from ADP in the presence of a proton gradient across the membrane. The gamma chain is believed to be important in regulating ATPase activity and the flow of protons through the CF(0) complex. The sequence is that of ATP synthase gamma chain from Buchnera aphidicola subsp. Baizongia pistaciae (strain Bp).